The following is a 331-amino-acid chain: Glyceraldehyde-3-phosphate dehydrogenase (331 aa).

NAD(+)-binding positions include Arg12–Ile13, Asp34, Arg78, and Thr120. N6-acetyllysine is present on residues Lys132 and Lys138. Residues Ser149–Thr151 and Thr180 each bind D-glyceraldehyde 3-phosphate. Cys150 acts as the Nucleophile in catalysis. An N6-acetyllysine modification is found at Lys192. Residues Thr209–Gly210 and Arg232 each bind D-glyceraldehyde 3-phosphate. Lys249 carries the N6-acetyllysine modification. Residue Asn314 coordinates NAD(+).

Belongs to the glyceraldehyde-3-phosphate dehydrogenase family. As to quaternary structure, homotetramer.

It is found in the cytoplasm. The catalysed reaction is D-glyceraldehyde 3-phosphate + phosphate + NAD(+) = (2R)-3-phospho-glyceroyl phosphate + NADH + H(+). The protein operates within carbohydrate degradation; glycolysis; pyruvate from D-glyceraldehyde 3-phosphate: step 1/5. Functionally, catalyzes the oxidative phosphorylation of glyceraldehyde 3-phosphate (G3P) to 1,3-bisphosphoglycerate (BPG) using the cofactor NAD. The first reaction step involves the formation of a hemiacetal intermediate between G3P and a cysteine residue, and this hemiacetal intermediate is then oxidized to a thioester, with concomitant reduction of NAD to NADH. The reduced NADH is then exchanged with the second NAD, and the thioester is attacked by a nucleophilic inorganic phosphate to produce BPG. The protein is Glyceraldehyde-3-phosphate dehydrogenase (gapA) of Escherichia coli O6:H1 (strain CFT073 / ATCC 700928 / UPEC).